The chain runs to 296 residues: Formamidopyrimidine-DNA glycosylase (296 aa).

Pro2 functions as the Schiff-base intermediate with DNA in the catalytic mechanism. The Proton donor role is filled by Glu3. Lys61 acts as the Proton donor; for beta-elimination activity in catalysis. DNA-binding residues include His104, Arg128, and Lys174. The FPG-type zinc-finger motif lies at 260–294 (HAYGQQGQACDRCGSNIIREKFANRSSHFCPRCQL). Arg284 serves as the catalytic Proton donor; for delta-elimination activity.

The protein belongs to the FPG family. As to quaternary structure, monomer. Zn(2+) serves as cofactor.

It carries out the reaction Hydrolysis of DNA containing ring-opened 7-methylguanine residues, releasing 2,6-diamino-4-hydroxy-5-(N-methyl)formamidopyrimidine.. It catalyses the reaction 2'-deoxyribonucleotide-(2'-deoxyribose 5'-phosphate)-2'-deoxyribonucleotide-DNA = a 3'-end 2'-deoxyribonucleotide-(2,3-dehydro-2,3-deoxyribose 5'-phosphate)-DNA + a 5'-end 5'-phospho-2'-deoxyribonucleoside-DNA + H(+). Functionally, involved in base excision repair of DNA damaged by oxidation or by mutagenic agents. Acts as a DNA glycosylase that recognizes and removes damaged bases. Has a preference for oxidized purines, such as 7,8-dihydro-8-oxoguanine (8-oxoG). Has AP (apurinic/apyrimidinic) lyase activity and introduces nicks in the DNA strand. Cleaves the DNA backbone by beta-delta elimination to generate a single-strand break at the site of the removed base with both 3'- and 5'-phosphates. The chain is Formamidopyrimidine-DNA glycosylase from Corynebacterium diphtheriae (strain ATCC 700971 / NCTC 13129 / Biotype gravis).